The following is a 314-amino-acid chain: MDKKKGILLVALGTPRSCEADDVRDYLKEFLGDPLVIQKPRWLWLPILNGIILKVRPQKSAEMYKKIWTDEGSPLMIYTVAQAKQLQDMREDFDVRFAMTYGEPRIDKVIAEMKESGVEEITVLPLYPQYSLTTVEPVIQQVKKIDDKIKVIRDFHKVESYSDLLAESIREKWQANDYDKLVLSYHGIPLSYVTKKKDAYEEQCKETTRLVVSKLGLREEEYEHTYQSKFGPEKWLEPATIDRVAELPKENAKKVLICSPAFVADCLETLFELEIENKEVFVENGGETFDFVHPFNDSLDFTRVLSEVVDQNRL.

Positions 186 and 268 each coordinate Fe(2+).

This sequence belongs to the ferrochelatase family.

It is found in the cytoplasm. It catalyses the reaction Fe-coproporphyrin III + 2 H(+) = coproporphyrin III + Fe(2+). It participates in porphyrin-containing compound metabolism; protoheme biosynthesis. Its function is as follows. Involved in coproporphyrin-dependent heme b biosynthesis. Catalyzes the insertion of ferrous iron into coproporphyrin III to form Fe-coproporphyrin III. The protein is Coproporphyrin III ferrochelatase of Lactococcus lactis subsp. lactis (strain IL1403) (Streptococcus lactis).